The primary structure comprises 67 residues: Large ribosomal subunit protein uL29 (67 aa).

It belongs to the universal ribosomal protein uL29 family.

The sequence is that of Large ribosomal subunit protein uL29 from Methanosarcina acetivorans (strain ATCC 35395 / DSM 2834 / JCM 12185 / C2A).